A 582-amino-acid polypeptide reads, in one-letter code: uncharacterized protein (582 aa).

The span at 1 to 23 (MAHEGSRQVRDRGVTRSKAEKVR) shows a compositional bias: basic and acidic residues. Disordered regions lie at residues 1-29 (MAHE…TVPV), 110-133 (AVAE…SWAQ), and 147-221 (LENF…SSAG). At Ser242 the chain carries Phosphoserine. Disordered stretches follow at residues 310-331 (RPSA…SAHH) and 551-582 (LSSG…PKPR). Residues 311–320 (PSASCQQQRA) are compositionally biased toward polar residues.

This is an uncharacterized protein from Homo sapiens (Human).